We begin with the raw amino-acid sequence, 236 residues long: Phosphoribosylaminoimidazole-succinocarboxamide synthase (236 aa).

Belongs to the SAICAR synthetase family.

The catalysed reaction is 5-amino-1-(5-phospho-D-ribosyl)imidazole-4-carboxylate + L-aspartate + ATP = (2S)-2-[5-amino-1-(5-phospho-beta-D-ribosyl)imidazole-4-carboxamido]succinate + ADP + phosphate + 2 H(+). It participates in purine metabolism; IMP biosynthesis via de novo pathway; 5-amino-1-(5-phospho-D-ribosyl)imidazole-4-carboxamide from 5-amino-1-(5-phospho-D-ribosyl)imidazole-4-carboxylate: step 1/2. This is Phosphoribosylaminoimidazole-succinocarboxamide synthase from Rickettsia africae (strain ESF-5).